The chain runs to 60 residues: Sperm protamine P1 (60 aa).

Residues 1–60 (MARYRHSRSRSRSRYQRRRRRRSRYRSQRRRYRRRRGSRRRRRRGRRRGYRRRYSRRRRY) form a disordered region.

This sequence belongs to the protamine P1 family. As to expression, testis.

It is found in the nucleus. It localises to the chromosome. Its function is as follows. Protamines substitute for histones in the chromatin of sperm during the haploid phase of spermatogenesis. They compact sperm DNA into a highly condensed, stable and inactive complex. The protein is Sperm protamine P1 (PRM1) of Phascolarctos cinereus (Koala).